The chain runs to 5628 residues: Polyketide synthase ThaG (5628 aa).

The 436-residue stretch at 13–448 folds into the Ketosynthase family 3 (KS3) 1 domain; it reads HDDIAVIGIA…GTNAHVVLRE (436 aa). Active-site for beta-ketoacyl synthase 1 activity residues include cysteine 184, histidine 319, and histidine 361. 2 disordered regions span residues 552–613 and 1156–1183; these read GNLV…DGPT and ASPG…RAEA. Residues 559-589 show a composition bias toward basic and acidic residues; that stretch reads GPHDEQADHDGSGEHGEHGERARAGADDLSR. Residues 1156–1173 are compositionally biased toward low complexity; sequence ASPGAASSGAAAPNAASD. Residues 1174–1183 show a composition bias toward basic and acidic residues; sequence ASRDTERAEA. The Carrier 1 domain occupies 1209 to 1286; the sequence is AHGSARLPAL…RLAGHLATRL (78 aa). The residue at position 1246 (serine 1246) is an O-(pantetheine 4'-phosphoryl)serine. One can recognise a Ketosynthase family 3 (KS3) 2 domain in the interval 1373–1781; sequence YEPIAIVGMS…GTNAHVIVEA (409 aa). Active-site for beta-ketoacyl synthase 2 activity residues include cysteine 1529, histidine 1664, and histidine 1704. The segment at 1967-2099 is N-terminal hotdog fold 1; it reads AREPGARERA…GVVDELNEPA (133 aa). Residues 1967–2261 enclose the PKS/mFAS DH 1 domain; the sequence is AREPGARERA…SARWRKLAGA (295 aa). Histidine 1999 functions as the Proton acceptor; for dehydratase activity 1 in the catalytic mechanism. A C-terminal hotdog fold 1 region spans residues 2113 to 2261; sequence AGERVDGAAL…SARWRKLAGA (149 aa). Catalysis depends on aspartate 2175, which acts as the Proton donor; for dehydratase activity 1. Residues 2426-2446 are disordered; sequence DADEDDRDGREPAGGPPLRDD. The Carrier 2 domain occupies 2702-2780; the sequence is PAARVDLHAL…AIARALDASA (79 aa). A disordered region spans residues 2817 to 2836; the sequence is TPPDAGAPQRGAHAAAAEGS. The span at 2822 to 2835 shows a compositional bias: low complexity; it reads GAPQRGAHAAAAEG. Residues 2862 to 2935 enclose the Carrier 3 domain; that stretch reads ARVGARLSAL…ELTDYFVRRH (74 aa). At serine 2896 the chain carries O-(pantetheine 4'-phosphoryl)serine. In terms of domain architecture, Ketosynthase family 3 (KS3) 3 spans 3005-3430; the sequence is ADAIAVIGLA…GANAHVIVRE (426 aa). Catalysis depends on for beta-ketoacyl synthase 3 activity residues cysteine 3175, histidine 3310, and histidine 3351. The segment at 3526-3546 is disordered; it reads PGKKQLRGNGRARRGDAPPAG. The N-terminal hotdog fold 2 stretch occupies residues 3621–3743; sequence HPMLDANRSE…GRSPSRAARG (123 aa). A PKS/mFAS DH 2 domain is found at 3621–3895; that stretch reads HPMLDANRSE…SRAAASWRTA (275 aa). The active-site Proton acceptor; for dehydratase activity 2 is histidine 3650. The interval 3758–3895 is C-terminal hotdog fold 2; that stretch reads RAAPAFDADA…SRAAASWRTA (138 aa). Residue aspartate 3818 is the Proton donor; for dehydratase activity 2 of the active site. Residues 3917–3942 are disordered; the sequence is PAAESPSAATSTSAATSPAISTSAAT. The Carrier 4 domain maps to 4840–4914; it reads TRTAALLRSL…ALAAYVGSQL (75 aa). Serine 4874 carries the O-(pantetheine 4'-phosphoryl)serine modification. A disordered region spans residues 4960 to 4992; that stretch reads APRARTGADAPDTSLASSASSISSARASSPASP. Residues 4998-5424 enclose the Ketosynthase family 3 (KS3) 4 domain; that stretch reads SFDVAIVGAS…GVNAHVVLEE (427 aa). Catalysis depends on for beta-ketoacyl synthase 4 activity residues cysteine 5158, histidine 5293, and histidine 5339. Residues 5470 to 5544 enclose the Carrier 5 domain; sequence ARIEAVIRDA…ALRDHVAERI (75 aa). Serine 5504 is subject to O-(pantetheine 4'-phosphoryl)serine. A disordered region spans residues 5573 to 5603; it reads VSEATEASDASEASDASEASEASEASEASKA.

Requires pantetheine 4'-phosphate as cofactor.

It is found in the cytoplasm. Its pathway is antibiotic biosynthesis. Involved in production of the polyketide antibiotic thailandamide. The protein is Polyketide synthase ThaG of Burkholderia thailandensis (strain ATCC 700388 / DSM 13276 / CCUG 48851 / CIP 106301 / E264).